The following is a 125-amino-acid chain: uncharacterized protein (125 aa).

This sequence to transposase of insertion sequence IS6501.

This is an uncharacterized protein from Sinorhizobium fredii (strain NBRC 101917 / NGR234).